Reading from the N-terminus, the 637-residue chain is Biosynthetic arginine decarboxylase (637 aa).

The residue at position 101 (K101) is an N6-(pyridoxal phosphate)lysine. 286-296 (FDVGGGLAVDY) serves as a coordination point for substrate.

This sequence belongs to the Orn/Lys/Arg decarboxylase class-II family. SpeA subfamily. Mg(2+) is required as a cofactor. Pyridoxal 5'-phosphate serves as cofactor.

The enzyme catalyses L-arginine + H(+) = agmatine + CO2. It participates in amine and polyamine biosynthesis; agmatine biosynthesis; agmatine from L-arginine: step 1/1. Functionally, catalyzes the biosynthesis of agmatine from arginine. The chain is Biosynthetic arginine decarboxylase from Shewanella baltica (strain OS223).